The chain runs to 223 residues: Probable iron-sulfur cluster repair protein HI_1677 (223 aa).

This sequence belongs to the RIC family.

It localises to the cytoplasm. Its function is as follows. Di-iron-containing protein involved in the repair of iron-sulfur clusters. This Haemophilus influenzae (strain ATCC 51907 / DSM 11121 / KW20 / Rd) protein is Probable iron-sulfur cluster repair protein HI_1677.